Consider the following 163-residue polypeptide: Cyanate hydratase (163 aa).

Residues Arg-103, Glu-106, and Ser-129 contribute to the active site.

It belongs to the cyanase family.

The enzyme catalyses cyanate + hydrogencarbonate + 3 H(+) = NH4(+) + 2 CO2. Catalyzes the reaction of cyanate with bicarbonate to produce ammonia and carbon dioxide. The protein is Cyanate hydratase of Paracoccidioides brasiliensis (strain Pb18).